Reading from the N-terminus, the 112-residue chain is Protein lin-52 homolog (112 aa).

This sequence belongs to the lin-52 family. Component of the DREAM complex.

The sequence is that of Protein lin-52 homolog (LIN52) from Gallus gallus (Chicken).